Consider the following 164-residue polypeptide: R-phycoerythrin alpha chain (164 aa).

Positions 82 and 139 each coordinate (2R,3E)-phycoerythrobilin.

Belongs to the phycobiliprotein family. In terms of assembly, heterodimer of an alpha and a beta chain. Post-translationally, contains two covalently linked bilin chromophores.

The protein resides in the plastid. It is found in the chloroplast thylakoid membrane. Functionally, light-harvesting photosynthetic bile pigment-protein from the phycobiliprotein complex. This is R-phycoerythrin alpha chain (cpeA) from Pyropia tenera (Nori).